A 352-amino-acid polypeptide reads, in one-letter code: Neutral protease 2 (352 aa).

Residues 1–19 (MRVTTLSTALFALASTAVS) form the signal peptide. A propeptide spanning residues 20 to 175 (APTAGSSSPG…TKALSQLTRR (156 aa)) is cleaved from the precursor. 3 disulfides stabilise this stretch: Cys-181–Cys-253, Cys-260–Cys-278, and Cys-292–Cys-352. His-303 is a Zn(2+) binding site. Glu-304 is a catalytic residue. 2 residues coordinate Zn(2+): His-307 and Asp-318.

This sequence belongs to the peptidase M35 family. Requires Zn(2+) as cofactor.

The catalysed reaction is Preferential cleavage of bonds with hydrophobic residues in P1'. Also 3-Asn-|-Gln-4 and 8-Gly-|-Ser-9 bonds in insulin B chain.. Its function is as follows. Metalloprotease that shows high activities on basic nuclear substrates such as histone and protamine. This Aspergillus oryzae (strain ATCC 42149 / RIB 40) (Yellow koji mold) protein is Neutral protease 2.